We begin with the raw amino-acid sequence, 349 residues long: sn-glycerol-3-phosphate import ATP-binding protein UgpC (349 aa).

An ABC transporter domain is found at 4-235 (VTLTAVRKVY…PASTFVASFM (232 aa)). 37–44 (GPSGCGKS) provides a ligand contact to ATP.

It belongs to the ABC transporter superfamily. sn-glycerol-3-phosphate importer (TC 3.A.1.1.3) family. In terms of assembly, the complex is composed of two ATP-binding proteins (UgpC), two transmembrane proteins (UgpA and UgpE) and a solute-binding protein (UgpB).

It localises to the cell inner membrane. The enzyme catalyses sn-glycerol 3-phosphate(out) + ATP + H2O = sn-glycerol 3-phosphate(in) + ADP + phosphate + H(+). Part of the ABC transporter complex UgpBAEC involved in sn-glycerol-3-phosphate (G3P) import. Responsible for energy coupling to the transport system. The protein is sn-glycerol-3-phosphate import ATP-binding protein UgpC of Jannaschia sp. (strain CCS1).